The following is a 244-amino-acid chain: Phosphoadenosine 5'-phosphosulfate reductase (244 aa).

C239 functions as the Nucleophile; cysteine thiosulfonate intermediate in the catalytic mechanism.

The protein belongs to the PAPS reductase family. CysH subfamily.

It localises to the cytoplasm. It catalyses the reaction [thioredoxin]-disulfide + sulfite + adenosine 3',5'-bisphosphate + 2 H(+) = [thioredoxin]-dithiol + 3'-phosphoadenylyl sulfate. It functions in the pathway sulfur metabolism; hydrogen sulfide biosynthesis; sulfite from sulfate: step 3/3. Its function is as follows. Catalyzes the formation of sulfite from phosphoadenosine 5'-phosphosulfate (PAPS) using thioredoxin as an electron donor. The polypeptide is Phosphoadenosine 5'-phosphosulfate reductase (Salmonella agona (strain SL483)).